The primary structure comprises 181 residues: Proteinase inhibitor A (181 aa).

Residues 1–24 (MAASNALLLISGVLLISLAVLCHG) form the signal peptide. 3 disulfide bridges follow: Cys-67-Cys-113, Cys-134-Cys-143, and Cys-136-Cys-139.

The protein belongs to the protease inhibitor I3 (leguminous Kunitz-type inhibitor) family.

Its subcellular location is the secreted. Its function is as follows. Possesses two reactive sites. Inhibits an equimolar amount of trypsin and chymotrypsin simultaneously, and inhibits kallikrein weakly. This chain is Proteinase inhibitor A, found in Sagittaria sagittifolia (Arrowhead).